The chain runs to 226 residues: NADH-quinone oxidoreductase subunit C (226 aa).

The interval 1–21 (MTEPTGDQTPEIIGVRRGMFG) is disordered.

This sequence belongs to the complex I 30 kDa subunit family. NDH-1 is composed of 14 different subunits. Subunits NuoB, C, D, E, F, and G constitute the peripheral sector of the complex.

It is found in the cell membrane. It carries out the reaction a quinone + NADH + 5 H(+)(in) = a quinol + NAD(+) + 4 H(+)(out). NDH-1 shuttles electrons from NADH, via FMN and iron-sulfur (Fe-S) centers, to quinones in the respiratory chain. The immediate electron acceptor for the enzyme in this species is believed to be a menaquinone. Couples the redox reaction to proton translocation (for every two electrons transferred, four hydrogen ions are translocated across the cytoplasmic membrane), and thus conserves the redox energy in a proton gradient. This chain is NADH-quinone oxidoreductase subunit C, found in Mycolicibacterium gilvum (strain PYR-GCK) (Mycobacterium gilvum (strain PYR-GCK)).